The following is a 159-amino-acid chain: uncharacterized protein (159 aa).

Over residues 1 to 13 the composition is skewed to basic and acidic residues; that stretch reads MESRPSGRQHASE. The segment at 1-35 is disordered; it reads MESRPSGRQHASEGDGDQSPTQCAGMRSSGRSDQP.

This is an uncharacterized protein from Homo sapiens (Human).